Reading from the N-terminus, the 1204-residue chain is Bromodomain and PHD finger-containing protein 3 (1204 aa).

2 disordered regions span residues 1 to 27 and 76 to 127; these read MRKP…KCSP and SNKE…TGSQ. Residues 89-99 are compositionally biased toward basic residues; the sequence is KSKKPSSKGKR. The PHD-type 1 zinc finger occupies 212–262; sequence DAFCCVCLDDECHNSNVILFCDICNLAVHQECYGVPYIPEGQWLCRCCLQS. The C2HC pre-PHD-type zinc-finger motif lies at 266–299; that stretch reads PVDCVLCPNKGGAFKQTSDGHWAHVVCAIWIPEV. Residues 323–387 form a PHD-type 2 zinc finger; that stretch reads LTCYICKQKG…RKTAYCEAHS (65 aa). The interval 393 to 464 is disordered; sequence ARRKGDSPRS…KKEPEEAGRE (72 aa). Phosphoserine is present on residues serine 399 and serine 402. Residues 417–429 show a composition bias toward acidic residues; the sequence is GEEEQEEAEEEGQ. The segment covering 442 to 454 has biased composition (basic residues); it reads VSKKGKMSLKQKI. N6-acetyllysine occurs at positions 445, 447, and 670. Residues 588-692 enclose the Bromo domain; sequence LELMPFTVLL…DLGGAILRHA (105 aa). Phosphoserine occurs at positions 712 and 739. Positions 778–879 are disordered; sequence RQKLAQPPPP…FLKSRKVEDE (102 aa). The span at 816–826 shows a compositional bias: acidic residues; that stretch reads QQEEPEEEGDR. 3 positions are modified to phosphoserine: serine 899, serine 961, and serine 964. The disordered stretch occupies residues 903–1015; that stretch reads IDRLSLTNPD…ESGSDSECSL (113 aa). Residues 979-990 show a composition bias toward basic and acidic residues; the sequence is SCSDSEGERSPQ. In terms of domain architecture, PWWP spans 1075–1158; the sequence is PLELVWAKCR…RDKVLPLGVE (84 aa).

As to quaternary structure, component of some HBO1 complexes composed of KAT7/HBO1, MEAF6, ING4 or ING5, and BRPF3. Component of the MOZ/MORF complex composed at least of ING5, KAT6A, KAT6B, MEAF6 and one of BRPF1, BRD1/BRPF2 and BRPF3. Interacts with KAT7/HBO1; the interaction is direct. In terms of tissue distribution, highly expressed in the adult testis and brain.

Its subcellular location is the nucleus. Scaffold subunit of various histone acetyltransferase (HAT) complexes, such as the MOZ/MORF and HBO1 complexes, which have a histone H3 acetyltransferase activity. Plays a role in DNA replication initiation by directing KAT7/HBO1 specificity towards histone H3 'Lys-14' acetylation (H3K14ac), thereby facilitating the activation of replication origins. Component of the MOZ/MORF complex which has a histone H3 acetyltransferase activity. This Mus musculus (Mouse) protein is Bromodomain and PHD finger-containing protein 3.